Consider the following 162-residue polypeptide: Auxin-responsive protein SAUR36 (162 aa).

It belongs to the ARG7 family. As to expression, expressed in embryo, endosperm, growing hypocotyls and shoot apical meristems.

In terms of biological role, acts a positive regulator of leaf senescence and may mediate auxin-induced leaf senescence. Plays a role in the regulation of seed germination by gibberellins and abscisic acid (ABA). Plays a role in the regulation of light-dependent hypocotyl elongation. The protein is Auxin-responsive protein SAUR36 of Arabidopsis thaliana (Mouse-ear cress).